Consider the following 426-residue polypeptide: Serine hydroxymethyltransferase (426 aa).

(6S)-5,6,7,8-tetrahydrofolate-binding positions include L122 and 126 to 128 (GHL). At K231 the chain carries N6-(pyridoxal phosphate)lysine. Residues E247 and 355-357 (SPF) contribute to the (6S)-5,6,7,8-tetrahydrofolate site.

Belongs to the SHMT family. In terms of assembly, homodimer. Pyridoxal 5'-phosphate is required as a cofactor.

The protein localises to the cytoplasm. The enzyme catalyses (6R)-5,10-methylene-5,6,7,8-tetrahydrofolate + glycine + H2O = (6S)-5,6,7,8-tetrahydrofolate + L-serine. The protein operates within one-carbon metabolism; tetrahydrofolate interconversion. It functions in the pathway amino-acid biosynthesis; glycine biosynthesis; glycine from L-serine: step 1/1. In terms of biological role, catalyzes the reversible interconversion of serine and glycine with tetrahydrofolate (THF) serving as the one-carbon carrier. This reaction serves as the major source of one-carbon groups required for the biosynthesis of purines, thymidylate, methionine, and other important biomolecules. Also exhibits THF-independent aldolase activity toward beta-hydroxyamino acids, producing glycine and aldehydes, via a retro-aldol mechanism. This is Serine hydroxymethyltransferase from Cyanothece sp. (strain PCC 7425 / ATCC 29141).